A 219-amino-acid chain; its full sequence is Uracil-DNA glycosylase (219 aa).

Aspartate 62 functions as the Proton acceptor in the catalytic mechanism.

This sequence belongs to the uracil-DNA glycosylase (UDG) superfamily. UNG family.

The protein localises to the cytoplasm. It catalyses the reaction Hydrolyzes single-stranded DNA or mismatched double-stranded DNA and polynucleotides, releasing free uracil.. In terms of biological role, excises uracil residues from the DNA which can arise as a result of misincorporation of dUMP residues by DNA polymerase or due to deamination of cytosine. This Lactococcus lactis subsp. cremoris (strain MG1363) protein is Uracil-DNA glycosylase.